Reading from the N-terminus, the 175-residue chain is Nucleoside diphosphate kinase 6 (175 aa).

Positions 15, 63, 91, 97, 111, and 121 each coordinate ATP. His124 acts as the Pros-phosphohistidine intermediate in catalysis.

The protein belongs to the NDK family. It depends on Mg(2+) as a cofactor.

It carries out the reaction a 2'-deoxyribonucleoside 5'-diphosphate + ATP = a 2'-deoxyribonucleoside 5'-triphosphate + ADP. It catalyses the reaction a ribonucleoside 5'-diphosphate + ATP = a ribonucleoside 5'-triphosphate + ADP. Major role in the synthesis of nucleoside triphosphates other than ATP. The ATP gamma phosphate is transferred to the NDP beta phosphate via a ping-pong mechanism, using a phosphorylated active-site intermediate. This chain is Nucleoside diphosphate kinase 6 (nme6), found in Danio rerio (Zebrafish).